The sequence spans 459 residues: Bifunctional protein GlmU (459 aa).

The segment at 1–230 (MSNRFAVILA…FDETLGVNDR (230 aa)) is pyrophosphorylase. Residues 9–12 (LAAG), Lys-23, Gln-73, and 78–79 (GT) contribute to the UDP-N-acetyl-alpha-D-glucosamine site. Residue Asp-103 participates in Mg(2+) binding. Gly-140, Glu-155, Asn-170, and Asn-228 together coordinate UDP-N-acetyl-alpha-D-glucosamine. Asn-228 lines the Mg(2+) pocket. The segment at 231 to 251 (VALSQAEIIMKNRINRKNMVN) is linker. The interval 252-459 (GVTIIDPSNT…VDQLLNKKKS (208 aa)) is N-acetyltransferase. Positions 333 and 351 each coordinate UDP-N-acetyl-alpha-D-glucosamine. Residue His-363 is the Proton acceptor of the active site. UDP-N-acetyl-alpha-D-glucosamine is bound by residues Tyr-366 and Asn-377. Residues 386 to 387 (NY), Ala-423, and Arg-440 each bind acetyl-CoA.

In the N-terminal section; belongs to the N-acetylglucosamine-1-phosphate uridyltransferase family. The protein in the C-terminal section; belongs to the transferase hexapeptide repeat family. Homotrimer. It depends on Mg(2+) as a cofactor.

The protein resides in the cytoplasm. It catalyses the reaction alpha-D-glucosamine 1-phosphate + acetyl-CoA = N-acetyl-alpha-D-glucosamine 1-phosphate + CoA + H(+). The catalysed reaction is N-acetyl-alpha-D-glucosamine 1-phosphate + UTP + H(+) = UDP-N-acetyl-alpha-D-glucosamine + diphosphate. Its pathway is nucleotide-sugar biosynthesis; UDP-N-acetyl-alpha-D-glucosamine biosynthesis; N-acetyl-alpha-D-glucosamine 1-phosphate from alpha-D-glucosamine 6-phosphate (route II): step 2/2. The protein operates within nucleotide-sugar biosynthesis; UDP-N-acetyl-alpha-D-glucosamine biosynthesis; UDP-N-acetyl-alpha-D-glucosamine from N-acetyl-alpha-D-glucosamine 1-phosphate: step 1/1. It functions in the pathway bacterial outer membrane biogenesis; LPS lipid A biosynthesis. Catalyzes the last two sequential reactions in the de novo biosynthetic pathway for UDP-N-acetylglucosamine (UDP-GlcNAc). The C-terminal domain catalyzes the transfer of acetyl group from acetyl coenzyme A to glucosamine-1-phosphate (GlcN-1-P) to produce N-acetylglucosamine-1-phosphate (GlcNAc-1-P), which is converted into UDP-GlcNAc by the transfer of uridine 5-monophosphate (from uridine 5-triphosphate), a reaction catalyzed by the N-terminal domain. This is Bifunctional protein GlmU from Bacillus cereus (strain ATCC 14579 / DSM 31 / CCUG 7414 / JCM 2152 / NBRC 15305 / NCIMB 9373 / NCTC 2599 / NRRL B-3711).